Here is a 223-residue protein sequence, read N- to C-terminus: Voltage-dependent calcium channel gamma-1 subunit (223 aa).

At 1-10 the chain is on the cytoplasmic side; sequence MSQTKTLKVR. A helical membrane pass occupies residues 11-29; sequence VALLCILVGIVLALVAVVT. At 30 to 109 the chain is on the extracellular side; sequence DHWAVLSPHV…TQKEYSISAA (80 aa). Residues Asn43 and Asn80 are each glycosylated (N-linked (GlcNAc...) asparagine). Cys57 and Cys81 form a disulfide bridge. The helical transmembrane segment at 110-130 threads the bilayer; the sequence is AIAIFSLGFIIVGTLCALLSF. Over 131 to 135 the chain is Cytoplasmic; it reads RKKRD. The helical transmembrane segment at 136 to 156 threads the bilayer; the sequence is YLLRPASMFYIFAGLCLSVSA. Residues 157 to 180 lie on the Extracellular side of the membrane; sequence EVMRQSVQRMVDSEHTAWIAHSLA. A helical transmembrane segment spans residues 181-205; sequence WSFICACVAAALLLVGGLALLLLAL. Residues 206 to 223 are Cytoplasmic-facing; it reads PRMPRDPWESCMDAEPEH.

This sequence belongs to the PMP-22/EMP/MP20 family. CACNG subfamily. Component of a calcium channel complex consisting of a pore-forming alpha subunit (CACNA1S) and the ancillary subunits CACNB1 or CACNB2, CACNG1 and CACNA2D1. The channel complex contains alpha, beta, gamma and delta subunits in a 1:1:1:1 ratio, i.e. it contains either CACNB1 or CACNB2. N-glycosylated.

It localises to the cell membrane. The protein localises to the sarcolemma. Its function is as follows. Regulatory subunit of the voltage-gated calcium channel that gives rise to L-type calcium currents in skeletal muscle. Regulates channel inactivation kinetics. This is Voltage-dependent calcium channel gamma-1 subunit (CACNG1) from Bos taurus (Bovine).